Reading from the N-terminus, the 170-residue chain is Acetyl-CoA decarbonylase/synthase complex subunit epsilon 1 (170 aa).

The protein belongs to the CdhB family. Heterotetramer of two alpha and two epsilon subunits. The ACDS complex is made up of alpha, epsilon, beta, gamma and delta subunits with a probable stoichiometry of (alpha(2)epsilon(2))(4)-beta(8)-(gamma(1)delta(1))(8).

It participates in one-carbon metabolism; methanogenesis from acetate. Functionally, part of a complex that catalyzes the reversible cleavage of acetyl-CoA, allowing growth on acetate as sole source of carbon and energy. The alpha-epsilon subcomponent functions as a carbon monoxide dehydrogenase. The precise role of the epsilon subunit is unclear; it may have a stabilizing role within the alpha(2)epsilon(2) component and/or be involved in electron transfer to FAD during a potential FAD-mediated CO oxidation. This is Acetyl-CoA decarbonylase/synthase complex subunit epsilon 1 (cdhB1) from Methanosarcina acetivorans (strain ATCC 35395 / DSM 2834 / JCM 12185 / C2A).